The sequence spans 79 residues: Secretory calcium-binding phosphoprotein proline-glutamine rich 1 (79 aa).

An N-terminal signal peptide occupies residues Met-1 to Ala-15.

It is found in the secreted. Functionally, tooth-associated epithelia protein that may participate in structuring the basal lamina at cell-tooth interface. The sequence is that of Secretory calcium-binding phosphoprotein proline-glutamine rich 1 from Homo sapiens (Human).